Consider the following 471-residue polypeptide: Glutamate--tRNA ligase (471 aa).

The 'HIGH' region signature appears at 9–19; sequence PSPTGFLHVGG. Zn(2+) contacts are provided by cysteine 98, cysteine 100, cysteine 125, and aspartate 127. The 'KMSKS' region motif lies at 237–241; it reads KLSKR. An ATP-binding site is contributed by lysine 240.

Belongs to the class-I aminoacyl-tRNA synthetase family. Glutamate--tRNA ligase type 1 subfamily. Monomer. The cofactor is Zn(2+).

The protein localises to the cytoplasm. It catalyses the reaction tRNA(Glu) + L-glutamate + ATP = L-glutamyl-tRNA(Glu) + AMP + diphosphate. Functionally, catalyzes the attachment of glutamate to tRNA(Glu) in a two-step reaction: glutamate is first activated by ATP to form Glu-AMP and then transferred to the acceptor end of tRNA(Glu). This is Glutamate--tRNA ligase from Aeromonas salmonicida (strain A449).